The primary structure comprises 244 residues: MPRPSPCADSGGGMMTTLTARPEAITFDPQQTALIVVDMQNAYATPGGYLDLAGFDVSTTRPVIANIQTAVTAARTAGMLIIWFQNGWDEQYVEAGGPGSPNFHKSNALKTMRNQPQLQGKLLAKGSWDYQLVDELVPQPGDIVLPKPRYSGFFNTPLDSILRSRGIRHLVFTGIATNVCVESTLRDGFFLEYFGVVLEDATHQAGPEFAQKAALFNIETFFGWVSDVETFCDALSSTSFARIA.

D38 serves as the catalytic Proton acceptor. Residue K147 is part of the active site. Catalysis depends on C180, which acts as the Nucleophile.

The protein belongs to the isochorismatase family. RutB subfamily.

It catalyses the reaction (Z)-3-ureidoacrylate + H2O + H(+) = (Z)-3-aminoacrylate + NH4(+) + CO2. The enzyme catalyses (Z)-3-ureidoacrylate + H2O = (Z)-3-aminoacrylate + carbamate + H(+). The catalysed reaction is (Z)-2-methylureidoacrylate + H2O + H(+) = (Z)-2-methylaminoacrylate + NH4(+) + CO2. Hydrolyzes ureidoacrylate to form aminoacrylate and carbamate. The carbamate hydrolyzes spontaneously, thereby releasing one of the nitrogen atoms of the pyrimidine ring as ammonia and one of its carbon atoms as CO2. The sequence is that of Ureidoacrylate amidohydrolase RutB from Escherichia coli O6:H1 (strain CFT073 / ATCC 700928 / UPEC).